We begin with the raw amino-acid sequence, 309 residues long: MPQIVIAALYKFVSLPDFEALREPLQAFCIENEIKGTLLLAQEGINGTVAGRREAIDALLAYFGKDARLADIDHKESYEEEQPFYRMKVKLKKEIVTMGVEGIDPNNIVGTYVEPKDWNSLIDDPEVIVVDTRNNYEYDIGTFEGALNPNTESFRELPEYVAKNLDPAKHKKVAMFCTGGIRCEKSTAFMKQRGFEEVYHLKGGILKYLEEVPEEQTRWKGECFVFDNRVAVNHALEKGTYDLCHGCRYPITEEDKKSEKYIEGVACPHCHDTQTPDQRARFMERQKQVQLAKARKQAHIGAPAPSRQK.

The Rhodanese domain maps to 123–217 (DDPEVIVVDT…YLEEVPEEQT (95 aa)). Cysteine 177 (cysteine persulfide intermediate) is an active-site residue.

Belongs to the TrhO family.

The enzyme catalyses uridine(34) in tRNA + AH2 + O2 = 5-hydroxyuridine(34) in tRNA + A + H2O. In terms of biological role, catalyzes oxygen-dependent 5-hydroxyuridine (ho5U) modification at position 34 in tRNAs. The protein is tRNA uridine(34) hydroxylase of Saccharophagus degradans (strain 2-40 / ATCC 43961 / DSM 17024).